The chain runs to 372 residues: DNA replication and repair protein RecF (372 aa).

An ATP-binding site is contributed by 30–37 (GDNGQGKT).

The protein belongs to the RecF family.

The protein localises to the cytoplasm. Functionally, the RecF protein is involved in DNA metabolism; it is required for DNA replication and normal SOS inducibility. RecF binds preferentially to single-stranded, linear DNA. It also seems to bind ATP. The chain is DNA replication and repair protein RecF from Ruminiclostridium cellulolyticum (strain ATCC 35319 / DSM 5812 / JCM 6584 / H10) (Clostridium cellulolyticum).